A 661-amino-acid chain; its full sequence is Kininogen-1 (661 aa).

An N-terminal signal peptide occupies residues 1–20 (MKLITTLLLCSGLLLTLTQG). One can recognise a Cystatin kininogen-type 1 domain in the interval 28–131 (CNDEAVFQAV…TQTCKIAPSK (104 aa)). 9 disulfide bridges follow: Cys-28-Cys-631, Cys-83-Cys-94, Cys-107-Cys-125, Cys-141-Cys-144, Cys-205-Cys-217, Cys-228-Cys-247, Cys-263-Cys-266, Cys-327-Cys-339, and Cys-350-Cys-369. Asn-82 carries an N-linked (GlcNAc...) asparagine glycan. The Cystatin kininogen-type 2 domain occupies 150 to 253 (TDSPDLEPVL…SQSCTLYSGD (104 aa)). 2 N-linked (GlcNAc...) asparagine glycosylation sites follow: Asn-168 and Asn-204. An N-linked (GlcNAc...) asparagine glycan is attached at Asn-242. A Cystatin kininogen-type 3 domain is found at 272-375 (VDSPELKEVL…TVKCQALDMT (104 aa)). Phosphoserine is present on Ser-331. Disordered regions lie at residues 405 to 471 (YIAR…LGHG), 485 to 583 (DGDD…FQDS), and 626 to 661 (ATSPKCPGRPWKPASWEDPNTETTEFSDFDLLDALS). Basic residues-rich tracts occupy residues 434-471 (KANKNHRGHKHGHDHGHWSPRRHGLGHGHQKPHGLGHG) and 492-526 (TVGHGHGHGHGHGHGHGHGHGHGHGHGHGHGHGKH). Residues 541 to 555 (TESLASSSEYSTTST) are compositionally biased toward low complexity. Residues 650 to 661 (EFSDFDLLDALS) are compositionally biased toward acidic residues.

In terms of assembly, isoform LMW interacts with CRISP3. In terms of processing, bradykinin is released from kininogen by plasma kallikrein. Post-translationally, phosphorylated by FAM20C in the extracellular medium. Bradykinin is inactivated by ACE, which removes the dipeptide Arg-Phe from its C-terminus. As to expression, plasma.

The protein resides in the secreted. The protein localises to the extracellular space. Its function is as follows. Kininogens are inhibitors of thiol proteases. HMW-kininogen plays an important role in blood coagulation by helping to position optimally prekallikrein and factor XI next to factor XII; HMW-kininogen inhibits the thrombin- and plasmin-induced aggregation of thrombocytes. LMW-kininogen inhibits the aggregation of thrombocytes. LMW-kininogen is in contrast to HMW-kininogen not involved in blood clotting. In terms of biological role, the active peptide bradykinin is a potent vasodilatator that is released from HMW-kininogen shows a variety of physiological effects: (A) influence in smooth muscle contraction, (B) induction of hypotension, (C) natriuresis and diuresis, (D) decrease in blood glucose level, (E) it is a mediator of inflammation and causes (E1) increase in vascular permeability, (E2) stimulation of nociceptors (4E3) release of other mediators of inflammation (e.g. prostaglandins), (F) it has a cardioprotective effect (directly via bradykinin action, indirectly via endothelium-derived relaxing factor action). The chain is Kininogen-1 (Kng1) from Mus musculus (Mouse).